The sequence spans 89 residues: MNIKPLADRVLVKPAAAEEKTVSGIIIPDSAKEKPLKGEVIAVGNGTKDEEMVLKAGDTVLYGKYAGTEIELEGEKYIIMRQNDVLAII.

This sequence belongs to the GroES chaperonin family. As to quaternary structure, heptamer of 7 subunits arranged in a ring. Interacts with the chaperonin GroEL.

It localises to the cytoplasm. In terms of biological role, together with the chaperonin GroEL, plays an essential role in assisting protein folding. The GroEL-GroES system forms a nano-cage that allows encapsulation of the non-native substrate proteins and provides a physical environment optimized to promote and accelerate protein folding. GroES binds to the apical surface of the GroEL ring, thereby capping the opening of the GroEL channel. This chain is Co-chaperonin GroES, found in Porphyromonas gingivalis (strain ATCC 33277 / DSM 20709 / CIP 103683 / JCM 12257 / NCTC 11834 / 2561).